Consider the following 119-residue polypeptide: Large ribosomal subunit protein bL20c (119 aa).

The protein belongs to the bacterial ribosomal protein bL20 family.

The protein resides in the plastid. It localises to the chloroplast. Its function is as follows. Binds directly to 23S ribosomal RNA and is necessary for the in vitro assembly process of the 50S ribosomal subunit. It is not involved in the protein synthesizing functions of that subunit. The protein is Large ribosomal subunit protein bL20c of Nandina domestica (Heavenly bamboo).